We begin with the raw amino-acid sequence, 316 residues long: D-alanine--D-alanine ligase (316 aa).

Residues 129-316 (KYILQAAGIP…ALQAEFCRYP (188 aa)) form the ATP-grasp domain. 162–217 (EGSLLYPMFIKPANMGSSVGITKAENREELQNALQEAYRYDTRAIVEQGIEAREIE) is an ATP binding site. Asp-288, Glu-301, and Asn-303 together coordinate Mg(2+).

The protein belongs to the D-alanine--D-alanine ligase family. It depends on Mg(2+) as a cofactor. Mn(2+) serves as cofactor.

The protein resides in the cytoplasm. It catalyses the reaction 2 D-alanine + ATP = D-alanyl-D-alanine + ADP + phosphate + H(+). The protein operates within cell wall biogenesis; peptidoglycan biosynthesis. In terms of biological role, cell wall formation. The sequence is that of D-alanine--D-alanine ligase (ddl) from Enterococcus gallinarum.